The sequence spans 244 residues: Transcriptional activator protein CarR (244 aa).

One can recognise an HTH luxR-type domain in the interval 162 to 227 (DNSRNALLSP…HAITKALELN (66 aa)). A DNA-binding region (H-T-H motif) is located at residues 186–205 (YKEVSRILGISEVTVKFHIN).

The protein belongs to the autoinducer-regulated transcriptional regulatory protein family.

Functions as an OHLL responsive transcriptional regulator which acts in the control of the biosynthesis of carbapenem antibiotics. This is Transcriptional activator protein CarR (carR) from Pectobacterium carotovorum subsp. carotovorum (Erwinia carotovora subsp. carotovora).